We begin with the raw amino-acid sequence, 279 residues long: MVRNSRLDICSIVNAKSGICDQDCKFCAQSSLYNTGVKRYPLLDEESILEKAKEAEKMGAVRFGIVTSGKRPTRDELLKIASIIEFLKVTTSLRICASLGTLEKDELSYLKDHGLDRYHHNLETSPGFFQNICTTHTFYDRVKTVENAKSIGLEVCSGGIFGVGESFEDRLELARILKDLEVDSVPINFLIPIKGTPFENFPELDVVERIKTIAAFRIVLGENVTIKIAAGREKLGDFQALAFFAGANGMIVGGYLTVKGRSYDDDRKLVEGLKELMGW.

One can recognise a Radical SAM core domain in the interval 2 to 232; it reads VRNSRLDICS…NVTIKIAAGR (231 aa). Residues Cys-20, Cys-24, and Cys-27 each coordinate [4Fe-4S] cluster. 3 residues coordinate [2Fe-2S] cluster: Cys-96, Cys-156, and Lys-227.

It belongs to the radical SAM superfamily. Biotin synthase family. In terms of assembly, homodimer. [4Fe-4S] cluster is required as a cofactor. The cofactor is [2Fe-2S] cluster.

The catalysed reaction is (4R,5S)-dethiobiotin + (sulfur carrier)-SH + 2 reduced [2Fe-2S]-[ferredoxin] + 2 S-adenosyl-L-methionine = (sulfur carrier)-H + biotin + 2 5'-deoxyadenosine + 2 L-methionine + 2 oxidized [2Fe-2S]-[ferredoxin]. Its pathway is cofactor biosynthesis; biotin biosynthesis; biotin from 7,8-diaminononanoate: step 2/2. In terms of biological role, catalyzes the conversion of dethiobiotin (DTB) to biotin by the insertion of a sulfur atom into dethiobiotin via a radical-based mechanism. This chain is Biotin synthase, found in Thermotoga neapolitana (strain ATCC 49049 / DSM 4359 / NBRC 107923 / NS-E).